Consider the following 441-residue polypeptide: Amino-acid acetyltransferase (441 aa).

One can recognise an N-acetyltransferase domain in the interval 295–434; the sequence is EQVRRATIND…QALYNYQRRS (140 aa).

This sequence belongs to the acetyltransferase family. ArgA subfamily. In terms of assembly, homohexamer.

It localises to the cytoplasm. It catalyses the reaction L-glutamate + acetyl-CoA = N-acetyl-L-glutamate + CoA + H(+). Its pathway is amino-acid biosynthesis; L-arginine biosynthesis; N(2)-acetyl-L-ornithine from L-glutamate: step 1/4. This chain is Amino-acid acetyltransferase, found in Pectobacterium atrosepticum (strain SCRI 1043 / ATCC BAA-672) (Erwinia carotovora subsp. atroseptica).